A 142-amino-acid chain; its full sequence is Small heat shock protein IbpB (142 aa).

Residues 26–137 (AGESQSFPPY…APQRIAISER (112 aa)) form the sHSP domain.

The protein belongs to the small heat shock protein (HSP20) family. Homodimer. Forms homomultimers of about 100-150 subunits at optimal growth temperatures. Conformation changes to oligomers at high temperatures or high ionic concentrations. The decrease in size of the multimers is accompanied by an increase in chaperone activity.

The protein resides in the cytoplasm. Associates with aggregated proteins, together with IbpA, to stabilize and protect them from irreversible denaturation and extensive proteolysis during heat shock and oxidative stress. Aggregated proteins bound to the IbpAB complex are more efficiently refolded and reactivated by the ATP-dependent chaperone systems ClpB and DnaK/DnaJ/GrpE. Its activity is ATP-independent. This is Small heat shock protein IbpB from Klebsiella pneumoniae subsp. pneumoniae (strain ATCC 700721 / MGH 78578).